The sequence spans 466 residues: Ribulose bisphosphate carboxylase large chain (466 aa).

N6,N6,N6-trimethyllysine is present on Lys5. Residues Asn114 and Thr164 each coordinate substrate. Lys166 (proton acceptor) is an active-site residue. Lys168 is a substrate binding site. Mg(2+) contacts are provided by Lys192, Asp194, and Glu195. Lys192 is modified (N6-carboxylysine). His285 functions as the Proton acceptor in the catalytic mechanism. Substrate-binding residues include Arg286, His318, and Ser370.

The protein belongs to the RuBisCO large chain family. Type I subfamily. In terms of assembly, heterohexadecamer of 8 large chains and 8 small chains; disulfide-linked. The disulfide link is formed within the large subunit homodimers. Mg(2+) is required as a cofactor. In terms of processing, the disulfide bond which can form in the large chain dimeric partners within the hexadecamer appears to be associated with oxidative stress and protein turnover.

The protein localises to the plastid. It is found in the chloroplast. It catalyses the reaction 2 (2R)-3-phosphoglycerate + 2 H(+) = D-ribulose 1,5-bisphosphate + CO2 + H2O. It carries out the reaction D-ribulose 1,5-bisphosphate + O2 = 2-phosphoglycolate + (2R)-3-phosphoglycerate + 2 H(+). Its function is as follows. RuBisCO catalyzes two reactions: the carboxylation of D-ribulose 1,5-bisphosphate, the primary event in carbon dioxide fixation, as well as the oxidative fragmentation of the pentose substrate in the photorespiration process. Both reactions occur simultaneously and in competition at the same active site. The sequence is that of Ribulose bisphosphate carboxylase large chain from Averrhoa carambola (Star fruit).